A 331-amino-acid polypeptide reads, in one-letter code: 6-phosphogluconolactonase (331 aa).

Position 287 is an N6-acetyllysine (lysine 287).

It belongs to the cycloisomerase 2 family.

It catalyses the reaction 6-phospho-D-glucono-1,5-lactone + H2O = 6-phospho-D-gluconate + H(+). Its pathway is carbohydrate degradation; pentose phosphate pathway; D-ribulose 5-phosphate from D-glucose 6-phosphate (oxidative stage): step 2/3. In terms of biological role, catalyzes the hydrolysis of 6-phosphogluconolactone to 6-phosphogluconate. The protein is 6-phosphogluconolactonase of Shigella flexneri.